The primary structure comprises 250 residues: Phosphoribosylaminoimidazole-succinocarboxamide synthase (250 aa).

Belongs to the SAICAR synthetase family.

It catalyses the reaction 5-amino-1-(5-phospho-D-ribosyl)imidazole-4-carboxylate + L-aspartate + ATP = (2S)-2-[5-amino-1-(5-phospho-beta-D-ribosyl)imidazole-4-carboxamido]succinate + ADP + phosphate + 2 H(+). The protein operates within purine metabolism; IMP biosynthesis via de novo pathway; 5-amino-1-(5-phospho-D-ribosyl)imidazole-4-carboxamide from 5-amino-1-(5-phospho-D-ribosyl)imidazole-4-carboxylate: step 1/2. The polypeptide is Phosphoribosylaminoimidazole-succinocarboxamide synthase (Picosynechococcus sp. (strain ATCC 27264 / PCC 7002 / PR-6) (Agmenellum quadruplicatum)).